The following is a 1289-amino-acid chain: uncharacterized protein (1289 aa).

An N-terminal signal peptide occupies residues 1 to 23; it reads MRKYTVIASILLSFLSVLSGGHH. One can recognise an LTD domain in the interval 141 to 277; that stretch reads EGYQADLAHI…VVISTNTGKD (137 aa).

This is an uncharacterized protein from Bacillus subtilis (strain 168).